A 315-amino-acid polypeptide reads, in one-letter code: Glutaminase (315 aa).

Residues Ser-70, Asn-120, Glu-166, Asn-173, Tyr-197, Tyr-249, and Val-267 each contribute to the substrate site.

The protein belongs to the glutaminase family. As to quaternary structure, homotetramer.

It carries out the reaction L-glutamine + H2O = L-glutamate + NH4(+). The chain is Glutaminase from Rhizobium meliloti (strain 1021) (Ensifer meliloti).